The primary structure comprises 319 residues: Beta-ketoacyl-[acyl-carrier-protein] synthase III (319 aa).

Catalysis depends on residues cysteine 113 and histidine 246. Positions 247-251 (QANIR) are ACP-binding. Asparagine 276 is a catalytic residue.

The protein belongs to the thiolase-like superfamily. FabH family. As to quaternary structure, homodimer.

Its subcellular location is the cytoplasm. The enzyme catalyses malonyl-[ACP] + acetyl-CoA + H(+) = 3-oxobutanoyl-[ACP] + CO2 + CoA. It functions in the pathway lipid metabolism; fatty acid biosynthesis. In terms of biological role, catalyzes the condensation reaction of fatty acid synthesis by the addition to an acyl acceptor of two carbons from malonyl-ACP. Catalyzes the first condensation reaction which initiates fatty acid synthesis and may therefore play a role in governing the total rate of fatty acid production. Possesses both acetoacetyl-ACP synthase and acetyl transacylase activities. Its substrate specificity determines the biosynthesis of branched-chain and/or straight-chain of fatty acids. This is Beta-ketoacyl-[acyl-carrier-protein] synthase III from Ehrlichia ruminantium (strain Gardel).